The primary structure comprises 239 residues: tRNA (guanine-N(7)-)-methyltransferase (239 aa).

Residues E69, E94, D121, and D144 each coordinate S-adenosyl-L-methionine. The active site involves D144. Substrate is bound by residues K148, D180, and 217 to 220 (TKFE).

It belongs to the class I-like SAM-binding methyltransferase superfamily. TrmB family.

It catalyses the reaction guanosine(46) in tRNA + S-adenosyl-L-methionine = N(7)-methylguanosine(46) in tRNA + S-adenosyl-L-homocysteine. It functions in the pathway tRNA modification; N(7)-methylguanine-tRNA biosynthesis. Functionally, catalyzes the formation of N(7)-methylguanine at position 46 (m7G46) in tRNA. This is tRNA (guanine-N(7)-)-methyltransferase from Alcanivorax borkumensis (strain ATCC 700651 / DSM 11573 / NCIMB 13689 / SK2).